Consider the following 377-residue polypeptide: Transcription initiation factor IIA subunit 1 (377 aa).

The residue at position 2 (A2) is an N-acetylalanine. Low complexity-rich tracts occupy residues 69 to 79 (QVQQQHQPQQQ), 89 to 105 (QAQP…TQQV), and 248 to 280 (QAQI…TGDT). Disordered stretches follow at residues 69–107 (QVQQ…QVLI) and 248–330 (QAQI…QELF). S281 and S282 each carry phosphoserine; by TAF1. Residues 281–330 (SSEEDEDEEEDYDDDEEEDKEKDGAEDGQVEEEPLNSEDDVSDEEGQELF) show a composition bias toward acidic residues. Phosphoserine is present on residues S317 and S322. 2 residues coordinate DNA: H344 and R345.

The protein belongs to the TFIIA subunit 1 family. TFIIA is a heterodimer of the large unprocessed subunit 1 and a small subunit gamma. It was originally believed to be a heterotrimer of an alpha (p35), a beta (p19) and a gamma subunit (p12). TFIIA forms a complex with TBP. Part of TBP-based Pol II pre-initiation complex (PIC), in which Pol II core assembles with general transcription factors and other specific initiation factors including GTF2E1, GTF2E2, GTF2F1, GTF2F2, TCEA1, ERCC2, ERCC3, GTF2H2, GTF2H3, GTF2H4, GTF2H5, GTF2A1, GTF2A2, GTF2B and TBP; this large multi-subunit PIC complex mediates DNA unwinding and targets Pol II core to the transcription start site where the first phosphodiester bond forms. The alpha and beta subunits are postranslationally produced from the precursor formby TASP1. The cleavage promotes proteasomal degradation.

The protein localises to the nucleus. Its function is as follows. TFIIA is a component of the transcription machinery of RNA polymerase II and plays an important role in transcriptional activation. TFIIA in a complex with TBP mediates transcriptional activity. The chain is Transcription initiation factor IIA subunit 1 (Gtf2a1) from Rattus norvegicus (Rat).